Here is a 162-residue protein sequence, read N- to C-terminus: Nitric oxide synthase, inducible (162 aa).

A compositionally biased stretch (polar residues) spans 24-37 (LQYHSLSKQQNESP). Residues 24-65 (LQYHSLSKQQNESPQPLVGTGKKSPESLVKPDATPLSSPRHV) form a disordered region. Zn(2+)-binding residues include Cys-90 and Cys-95. Ser-98 serves as a coordination point for (6R)-L-erythro-5,6,7,8-tetrahydrobiopterin. Glu-132 serves as a coordination point for L-arginine. His-160 lines the FAD pocket.

It belongs to the NOS family. As to quaternary structure, homodimer. Interacts with NHERF1. Interacts with GAPDH; induced by oxidatively-modified low-densitity lipoprotein (LDL(ox)). Interacts with S100A8 and S100A9 to form the iNOS-S100A8/9 transnitrosylase complex. Interacts with SPSB1, SPSB2 and SPSB4. Interacts with ELOC and CUL5 in the presence of SPSB1 or SPSB2 or SPSB4. Forms a complex with ASL, ASS1 and HSP90AA1; the complex regulates cell-autonomous L-arginine synthesis and citrulline recycling while channeling extracellular L-arginine to nitric oxide synthesis pathway. It depends on heme b as a cofactor. FAD is required as a cofactor. The cofactor is FMN. (6R)-L-erythro-5,6,7,8-tetrahydrobiopterin serves as cofactor. In terms of processing, polyubiquitinated; mediated by SPSB1, SPSB2 and SPSB4, leading to proteasomal degradation.

The protein localises to the cytoplasm. Its subcellular location is the cytosol. The catalysed reaction is 2 L-arginine + 3 NADPH + 4 O2 + H(+) = 2 L-citrulline + 2 nitric oxide + 3 NADP(+) + 4 H2O. With respect to regulation, regulated by calcium/calmodulin. Functionally, produces nitric oxide (NO) which is a messenger molecule with diverse functions throughout the body. In macrophages, NO mediates tumoricidal and bactericidal actions. Also has nitrosylase activity and mediates cysteine S-nitrosylation of cytoplasmic target proteins such PTGS2/COX2. As component of the iNOS-S100A8/9 transnitrosylase complex involved in the selective inflammatory stimulus-dependent S-nitrosylation of GAPDH implicated in regulation of the GAIT complex activity and probably multiple targets including ANXA5, EZR, MSN and VIM. Involved in inflammation, enhances the synthesis of pro-inflammatory mediators such as IL6 and IL8. This chain is Nitric oxide synthase, inducible (NOS2), found in Macaca mulatta (Rhesus macaque).